Here is a 1066-residue protein sequence, read N- to C-terminus: Carbamoyl phosphate synthase large chain (1066 aa).

The carboxyphosphate synthetic domain stretch occupies residues 1–401 (MPKNNNIKKV…ALMKAVRSLE (401 aa)). The ATP site is built by arginine 129, arginine 169, glycine 175, glycine 176, arginine 208, isoleucine 210, glutamate 215, glycine 241, valine 242, histidine 243, glutamine 284, and glutamate 298. Positions 133–327 (KNTMEKIGEP…IAKVAAKIAL (195 aa)) constitute an ATP-grasp 1 domain. Residues glutamine 284, glutamate 298, and asparagine 300 each contribute to the Mg(2+) site. Residues glutamine 284, glutamate 298, and asparagine 300 each coordinate Mn(2+). Residues 402–547 (QNIYSMNYGD…YSCFDSENEV (146 aa)) are oligomerization domain. Residues 548-931 (DATKTKKKVL…ALYKAFLGAG (384 aa)) are carbamoyl phosphate synthetic domain. The ATP-grasp 2 domain maps to 673–863 (DEILEKCCIP…IVSLASKAVL (191 aa)). ATP is bound by residues arginine 709, lysine 748, leucine 750, glutamate 754, glycine 779, isoleucine 780, histidine 781, serine 782, glutamine 822, and glutamate 834. Glutamine 822, glutamate 834, and asparagine 836 together coordinate Mg(2+). Mn(2+) is bound by residues glutamine 822, glutamate 834, and asparagine 836. Positions 932–1066 (INLPKHKKMI…ELSLIDIARI (135 aa)) constitute an MGS-like domain. Positions 932–1066 (INLPKHKKMI…ELSLIDIARI (135 aa)) are allosteric domain.

It belongs to the CarB family. Composed of two chains; the small (or glutamine) chain promotes the hydrolysis of glutamine to ammonia, which is used by the large (or ammonia) chain to synthesize carbamoyl phosphate. Tetramer of heterodimers (alpha,beta)4. Mg(2+) is required as a cofactor. The cofactor is Mn(2+).

It catalyses the reaction hydrogencarbonate + L-glutamine + 2 ATP + H2O = carbamoyl phosphate + L-glutamate + 2 ADP + phosphate + 2 H(+). It carries out the reaction hydrogencarbonate + NH4(+) + 2 ATP = carbamoyl phosphate + 2 ADP + phosphate + 2 H(+). Its pathway is amino-acid biosynthesis; L-arginine biosynthesis; carbamoyl phosphate from bicarbonate: step 1/1. The protein operates within pyrimidine metabolism; UMP biosynthesis via de novo pathway; (S)-dihydroorotate from bicarbonate: step 1/3. Its function is as follows. Large subunit of the glutamine-dependent carbamoyl phosphate synthetase (CPSase). CPSase catalyzes the formation of carbamoyl phosphate from the ammonia moiety of glutamine, carbonate, and phosphate donated by ATP, constituting the first step of 2 biosynthetic pathways, one leading to arginine and/or urea and the other to pyrimidine nucleotides. The large subunit (synthetase) binds the substrates ammonia (free or transferred from glutamine from the small subunit), hydrogencarbonate and ATP and carries out an ATP-coupled ligase reaction, activating hydrogencarbonate by forming carboxy phosphate which reacts with ammonia to form carbamoyl phosphate. This is Carbamoyl phosphate synthase large chain from Lachnoclostridium phytofermentans (strain ATCC 700394 / DSM 18823 / ISDg) (Clostridium phytofermentans).